The chain runs to 120 residues: NAD(P)H-quinone oxidoreductase subunit 3, chloroplastic (120 aa).

Helical transmembrane passes span 9-29 (FFWA…LISG), 64-84 (MFAL…PWAM), and 88-108 (VLGV…IIGL).

The protein belongs to the complex I subunit 3 family. In terms of assembly, NDH is composed of at least 16 different subunits, 5 of which are encoded in the nucleus.

It is found in the plastid. The protein localises to the chloroplast thylakoid membrane. The enzyme catalyses a plastoquinone + NADH + (n+1) H(+)(in) = a plastoquinol + NAD(+) + n H(+)(out). It carries out the reaction a plastoquinone + NADPH + (n+1) H(+)(in) = a plastoquinol + NADP(+) + n H(+)(out). In terms of biological role, NDH shuttles electrons from NAD(P)H:plastoquinone, via FMN and iron-sulfur (Fe-S) centers, to quinones in the photosynthetic chain and possibly in a chloroplast respiratory chain. The immediate electron acceptor for the enzyme in this species is believed to be plastoquinone. Couples the redox reaction to proton translocation, and thus conserves the redox energy in a proton gradient. This is NAD(P)H-quinone oxidoreductase subunit 3, chloroplastic from Nicotiana tabacum (Common tobacco).